The sequence spans 635 residues: Probable retaining alpha-galactosidase (635 aa).

Residues 1 to 30 (MARSVRRTTLALLLSAVLAMTLFVTAPAHA) form the signal peptide. Asp-179 contributes to the Ca(2+) binding site. The active-site Nucleophile is the Asp-397. Glu-446 and Glu-452 together coordinate Ca(2+). The Proton donor/acceptor role is filled by Glu-452.

This sequence belongs to the glycosyl hydrolase 97 family. Requires Ca(2+) as cofactor.

It catalyses the reaction Hydrolysis of terminal, non-reducing alpha-D-galactose residues in alpha-D-galactosides, including galactose oligosaccharides, galactomannans and galactolipids.. The polypeptide is Probable retaining alpha-galactosidase (Streptomyces bingchenggensis (strain BCW-1)).